We begin with the raw amino-acid sequence, 355 residues long: Guanine nucleotide-binding protein G(i) subunit alpha-2 (355 aa).

A lipid anchor (N-myristoyl glycine) is attached at G2. C3 is lipidated: S-palmitoyl cysteine. Positions 32–355 (REVKLLLLGA…KNNLKDCGLF (324 aa)) constitute a G-alpha domain. Residues 35-48 (KLLLLGAGESGKST) are G1 motif. GTP-binding positions include 40-47 (GAGESGKS), 176-182 (LRTRVKT), 201-205 (DVGGQ), 270-273 (NKKD), and A327. 2 residues coordinate Mg(2+): S47 and T182. The segment at 174 to 182 (DVLRTRVKT) is G2 motif. A G3 motif region spans residues 197 to 206 (FKMFDVGGQR). A G4 motif region spans residues 266–273 (ILFLNKKD). The segment at 325–330 (TCATDT) is G5 motif.

The protein belongs to the G-alpha family. G(i/o/t/z) subfamily. In terms of assembly, g proteins are composed of 3 units; alpha, beta and gamma. The alpha chain contains the guanine nucleotide binding site. In this context, interacts with GNB2. Interacts with UNC5B. Interacts with GPSM1. Interacts with RGS12 and RGS14. Interacts (inactive GDP-bound form) with NUCB1 (via GBA motif); the interaction leads to activation of GNAI3. Interacts (inactive GDP-bound form) with CCDC88C/DAPLE (via GBA motif). Interacts (inactive GDP-bound form) with CCDC8A/GIV (via GBA motif). Interacts with CXCR1 and CXCR2.

Its subcellular location is the cytoplasm. It is found in the cytoskeleton. It localises to the microtubule organizing center. The protein resides in the centrosome. The protein localises to the cell membrane. Its subcellular location is the membrane. Guanine nucleotide-binding proteins (G proteins) are involved as modulators or transducers in various transmembrane signaling systems. The G(i) proteins are involved in hormonal regulation of adenylate cyclase: they inhibit the cyclase in response to beta-adrenergic stimuli. May play a role in cell division. The protein is Guanine nucleotide-binding protein G(i) subunit alpha-2 (GNAI2) of Canis lupus familiaris (Dog).